Reading from the N-terminus, the 633-residue chain is Chaperone protein DnaK (633 aa).

The residue at position 196 (threonine 196) is a Phosphothreonine; by autocatalysis. Residues asparagine 594 to lysine 633 form a disordered region. Over residues histidine 610 to glycine 619 the composition is skewed to gly residues.

It belongs to the heat shock protein 70 family.

Functionally, acts as a chaperone. The polypeptide is Chaperone protein DnaK (Chlorobaculum tepidum (strain ATCC 49652 / DSM 12025 / NBRC 103806 / TLS) (Chlorobium tepidum)).